The chain runs to 934 residues: 2-oxoglutarate dehydrogenase E1 component (934 aa).

It belongs to the alpha-ketoglutarate dehydrogenase family. Homodimer. Part of the 2-oxoglutarate dehydrogenase (OGDH) complex composed of E1 (2-oxoglutarate dehydrogenase), E2 (dihydrolipoamide succinyltransferase) and E3 (dihydrolipoamide dehydrogenase); the complex contains multiple copies of the three enzymatic components (E1, E2 and E3). Thiamine diphosphate serves as cofactor.

The catalysed reaction is N(6)-[(R)-lipoyl]-L-lysyl-[protein] + 2-oxoglutarate + H(+) = N(6)-[(R)-S(8)-succinyldihydrolipoyl]-L-lysyl-[protein] + CO2. Its function is as follows. E1 component of the 2-oxoglutarate dehydrogenase (OGDH) complex which catalyzes the decarboxylation of 2-oxoglutarate, the first step in the conversion of 2-oxoglutarate to succinyl-CoA and CO(2). The chain is 2-oxoglutarate dehydrogenase E1 component (sucA) from Coxiella burnetii (strain RSA 493 / Nine Mile phase I).